Reading from the N-terminus, the 75-residue chain is Lipid-anchored plasma membrane protein CPP2 (75 aa).

The interval 1–43 (MSQQQGYYQQGPPQQGYYQQGPPQQGYYQQGPPQQGYPQQQPV) is disordered. 3 tandem repeats follow at residues 4–13 (QQGYYQQGPP), 14–23 (QQGYYQQGPP), and 24–33 (QQGYYQQGPP). The segment at 4 to 33 (QQGYYQQGPPQQGYYQQGPPQQGYYQQGPP) is 3 X 10 AA tandem repeats of Q-Q-G-Y-Y-Q-Q-G-P-P.

It belongs to the CYSTM1 family. In terms of processing, palmitoylated near the C-terminus.

The protein resides in the cell membrane. In Saccharomyces cerevisiae (strain ATCC 204508 / S288c) (Baker's yeast), this protein is Lipid-anchored plasma membrane protein CPP2.